We begin with the raw amino-acid sequence, 280 residues long: C-type lectin domain family 1 member A (280 aa).

The tract at residues methionine 1–serine 44 is disordered. At methionine 1–leucine 52 the chain is on the cytoplasmic side. Residues threonine 18 to threonine 30 show a composition bias toward polar residues. Residues arginine 31–alanine 42 show a composition bias toward basic and acidic residues. Residues threonine 53 to phenylalanine 73 form a helical; Signal-anchor for type II membrane protein membrane-spanning segment. At glutamine 74–aspartate 280 the chain is on the extracellular side. 2 N-linked (GlcNAc...) asparagine glycosylation sites follow: asparagine 95 and asparagine 169. In terms of domain architecture, C-type lectin spans histidine 144–glutamate 258. Disulfide bonds link cysteine 165–cysteine 257 and cysteine 236–cysteine 249.

As to expression, expressed preferentially in dendritic cells.

The protein resides in the membrane. This is C-type lectin domain family 1 member A (CLEC1A) from Homo sapiens (Human).